The primary structure comprises 132 residues: Small ribosomal subunit protein uS8 (132 aa).

This sequence belongs to the universal ribosomal protein uS8 family. Part of the 30S ribosomal subunit. Contacts proteins S5 and S12.

Its function is as follows. One of the primary rRNA binding proteins, it binds directly to 16S rRNA central domain where it helps coordinate assembly of the platform of the 30S subunit. The sequence is that of Small ribosomal subunit protein uS8 from Staphylococcus carnosus (strain TM300).